The sequence spans 115 residues: Insulin (115 aa).

The signal sequence occupies residues 1–22; sequence MAALWLQSVSLLVLMLVSWSGS. Cystine bridges form between cysteine 32–cysteine 101, cysteine 44–cysteine 114, and cysteine 100–cysteine 105. Residues 56 to 92 constitute a propeptide, c peptide; it reads DVDPLLGFLPAKSGGAAAGGENEVAEFAFKDQMEMMV.

Belongs to the insulin family. Heterodimer of a B chain and an A chain linked by two disulfide bonds.

It localises to the secreted. Its function is as follows. Insulin decreases blood glucose concentration. It increases cell permeability to monosaccharides, amino acids and fatty acids. It accelerates glycolysis, the pentose phosphate cycle, and glycogen synthesis in liver. This Verasper moseri (Barfin flounder) protein is Insulin (ins).